The chain runs to 205 residues: Translation initiation factor 2 subunit beta (205 aa).

The TRAM domain occupies 145-203 (GIEIGKEYTVTIESTGSAGEGIARYQGYTIYVPKAKKGERVKIIIRKIKRNVAIAELAD).

It belongs to the eIF-2-beta/eIF-5 family. As to quaternary structure, heterotrimer composed of an alpha, a beta and a gamma chain.

Its function is as follows. eIF-2 functions in the early steps of protein synthesis by forming a ternary complex with GTP and initiator tRNA. In Picrophilus torridus (strain ATCC 700027 / DSM 9790 / JCM 10055 / NBRC 100828 / KAW 2/3), this protein is Translation initiation factor 2 subunit beta.